Here is a 390-residue protein sequence, read N- to C-terminus: Queuine tRNA-ribosyltransferase (390 aa).

Asp-92 (proton acceptor) is an active-site residue. Residues 92-96 (DSGGF), Asp-146, Gln-195, and Gly-222 each bind substrate. The tract at residues 253–259 (GVGTPED) is RNA binding. Asp-272 acts as the Nucleophile in catalysis. The tract at residues 277-281 (TRNAR) is RNA binding; important for wobble base 34 recognition. Zn(2+) contacts are provided by Cys-310, Cys-312, Cys-315, and His-354.

Belongs to the queuine tRNA-ribosyltransferase family. As to quaternary structure, homodimer. Within each dimer, one monomer is responsible for RNA recognition and catalysis, while the other monomer binds to the replacement base PreQ1. Requires Zn(2+) as cofactor.

It carries out the reaction 7-aminomethyl-7-carbaguanine + guanosine(34) in tRNA = 7-aminomethyl-7-carbaguanosine(34) in tRNA + guanine. It participates in tRNA modification; tRNA-queuosine biosynthesis. Catalyzes the base-exchange of a guanine (G) residue with the queuine precursor 7-aminomethyl-7-deazaguanine (PreQ1) at position 34 (anticodon wobble position) in tRNAs with GU(N) anticodons (tRNA-Asp, -Asn, -His and -Tyr). Catalysis occurs through a double-displacement mechanism. The nucleophile active site attacks the C1' of nucleotide 34 to detach the guanine base from the RNA, forming a covalent enzyme-RNA intermediate. The proton acceptor active site deprotonates the incoming PreQ1, allowing a nucleophilic attack on the C1' of the ribose to form the product. After dissociation, two additional enzymatic reactions on the tRNA convert PreQ1 to queuine (Q), resulting in the hypermodified nucleoside queuosine (7-(((4,5-cis-dihydroxy-2-cyclopenten-1-yl)amino)methyl)-7-deazaguanosine). The sequence is that of Queuine tRNA-ribosyltransferase from Acidovorax ebreus (strain TPSY) (Diaphorobacter sp. (strain TPSY)).